The following is a 124-amino-acid chain: MARVAGVDIPGNKRVEIGLTYICGIGPTRSRHALTAAGISFDTRVKDLTDDQLVALRAHIQNSYRIEGDLRREVASDIRRKVEIGCYQGLRHRRGLPVNGQRTRTNARSSKGPRRTVAGKKKAR.

Residues 95 to 124 form a disordered region; sequence GLPVNGQRTRTNARSSKGPRRTVAGKKKAR. Over residues 100–109 the composition is skewed to polar residues; sequence GQRTRTNARS. The span at 111-124 shows a compositional bias: basic residues; sequence KGPRRTVAGKKKAR.

The protein belongs to the universal ribosomal protein uS13 family. Part of the 30S ribosomal subunit. Forms a loose heterodimer with protein S19. Forms two bridges to the 50S subunit in the 70S ribosome.

Its function is as follows. Located at the top of the head of the 30S subunit, it contacts several helices of the 16S rRNA. In the 70S ribosome it contacts the 23S rRNA (bridge B1a) and protein L5 of the 50S subunit (bridge B1b), connecting the 2 subunits; these bridges are implicated in subunit movement. Contacts the tRNAs in the A and P-sites. This Tropheryma whipplei (strain TW08/27) (Whipple's bacillus) protein is Small ribosomal subunit protein uS13.